The primary structure comprises 1598 residues: Pentafunctional AROM polypeptide (1598 aa).

Positions 1 to 384 (MGVPTKISIL…YEPRASTVSN (384 aa)) are 3-dehydroquinate synthase. NAD(+) is bound by residues 44 to 46 (DTN), 81 to 84 (ESSK), 114 to 116 (GGV), and D119. R130 contacts 7-phospho-2-dehydro-3-deoxy-D-arabino-heptonate. 139 to 140 (TT) serves as a coordination point for NAD(+). 7-phospho-2-dehydro-3-deoxy-D-arabino-heptonate is bound by residues D146 and K152. K161 contributes to the NAD(+) binding site. Position 162 (N162) interacts with 7-phospho-2-dehydro-3-deoxy-D-arabino-heptonate. Residues 179–182 (FLNT) and N190 each bind NAD(+). Residue E194 coordinates Zn(2+). 7-phospho-2-dehydro-3-deoxy-D-arabino-heptonate is bound by residues 194–197 (EVIK) and K250. The Proton acceptor; for 3-dehydroquinate synthase activity role is filled by E260. Residues 264–268 (RNLLN) and H271 each bind 7-phospho-2-dehydro-3-deoxy-D-arabino-heptonate. H271 provides a ligand contact to Zn(2+). H275 acts as the Proton acceptor; for 3-dehydroquinate synthase activity in catalysis. 2 residues coordinate 7-phospho-2-dehydro-3-deoxy-D-arabino-heptonate: H287 and K356. H287 provides a ligand contact to Zn(2+). The segment at 397–842 (VYPGFPKSLN…WNTLAQTFKV (446 aa)) is EPSP synthase. C824 functions as the For EPSP synthase activity in the catalytic mechanism. Positions 867-1059 (AASIFIIGMR…RRKENTFFVS (193 aa)) are shikimate kinase. 874-881 (GMRGAGKT) is an ATP binding site. A 3-dehydroquinase region spans residues 1060–1280 (LTFPDLTPAS…AAPGQLSARE (221 aa)). Catalysis depends on H1183, which acts as the Proton acceptor; for 3-dehydroquinate dehydratase activity. Catalysis depends on K1211, which acts as the Schiff-base intermediate with substrate; for 3-dehydroquinate dehydratase activity. Residues 1293–1598 (AKKFAVIGKP…GVSSSDDTIS (306 aa)) form a shikimate dehydrogenase region.

The protein in the N-terminal section; belongs to the sugar phosphate cyclases superfamily. Dehydroquinate synthase family. In the 2nd section; belongs to the EPSP synthase family. This sequence in the 3rd section; belongs to the shikimate kinase family. It in the 4th section; belongs to the type-I 3-dehydroquinase family. The protein in the C-terminal section; belongs to the shikimate dehydrogenase family. Homodimer. Zn(2+) is required as a cofactor.

It is found in the cytoplasm. The catalysed reaction is 7-phospho-2-dehydro-3-deoxy-D-arabino-heptonate = 3-dehydroquinate + phosphate. The enzyme catalyses 3-dehydroquinate = 3-dehydroshikimate + H2O. It catalyses the reaction shikimate + NADP(+) = 3-dehydroshikimate + NADPH + H(+). It carries out the reaction shikimate + ATP = 3-phosphoshikimate + ADP + H(+). The catalysed reaction is 3-phosphoshikimate + phosphoenolpyruvate = 5-O-(1-carboxyvinyl)-3-phosphoshikimate + phosphate. The protein operates within metabolic intermediate biosynthesis; chorismate biosynthesis; chorismate from D-erythrose 4-phosphate and phosphoenolpyruvate: step 2/7. Its pathway is metabolic intermediate biosynthesis; chorismate biosynthesis; chorismate from D-erythrose 4-phosphate and phosphoenolpyruvate: step 3/7. It functions in the pathway metabolic intermediate biosynthesis; chorismate biosynthesis; chorismate from D-erythrose 4-phosphate and phosphoenolpyruvate: step 4/7. It participates in metabolic intermediate biosynthesis; chorismate biosynthesis; chorismate from D-erythrose 4-phosphate and phosphoenolpyruvate: step 5/7. The protein operates within metabolic intermediate biosynthesis; chorismate biosynthesis; chorismate from D-erythrose 4-phosphate and phosphoenolpyruvate: step 6/7. Functionally, the AROM polypeptide catalyzes 5 consecutive enzymatic reactions in prechorismate polyaromatic amino acid biosynthesis. This chain is Pentafunctional AROM polypeptide, found in Paracoccidioides brasiliensis (strain Pb18).